The following is a 447-amino-acid chain: Tryptophan 5-hydroxylase 1 (447 aa).

An ACT domain is found at 22–97; that stretch reads TLIFSLENEV…TVLSVDSPDQ (76 aa). The residue at position 61 (Ser-61) is a Phosphoserine; by PKA. L-tryptophan-binding residues include Tyr-238, Arg-260, and Thr-268. 3 residues coordinate Fe cation: His-275, His-280, and Glu-320. L-tryptophan contacts are provided by Ser-339 and Ile-369.

The protein belongs to the biopterin-dependent aromatic amino acid hydroxylase family. Homotetramer. Interacts with DNAJC12. It depends on Fe(2+) as a cofactor. Post-translationally, ubiquitinated, leading to its degradation by the proteasome. Ubiquitinated is triggered by phosphorylation. Phosphorylated; triggering degradation by the proteasome.

It catalyses the reaction (6R)-L-erythro-5,6,7,8-tetrahydrobiopterin + L-tryptophan + O2 = 5-hydroxy-L-tryptophan + (4aS,6R)-4a-hydroxy-L-erythro-5,6,7,8-tetrahydrobiopterin. It participates in aromatic compound metabolism; serotonin biosynthesis; serotonin from L-tryptophan: step 1/2. Its function is as follows. Oxidizes L-tryptophan to 5-hydroxy-l-tryptophan in the rate-determining step of serotonin biosynthesis. The protein is Tryptophan 5-hydroxylase 1 of Mus musculus (Mouse).